The primary structure comprises 787 residues: LPS-assembly protein LptD (787 aa).

Residues 1 to 39 (MPRKTLLPLVPACDAAPRRKRLAAALLAVPGLVPAVSQA) form the signal peptide.

Belongs to the LptD family. As to quaternary structure, component of the lipopolysaccharide transport and assembly complex. Interacts with LptE and LptA.

The protein localises to the cell outer membrane. Together with LptE, is involved in the assembly of lipopolysaccharide (LPS) at the surface of the outer membrane. The sequence is that of LPS-assembly protein LptD from Burkholderia thailandensis (strain ATCC 700388 / DSM 13276 / CCUG 48851 / CIP 106301 / E264).